Consider the following 615-residue polypeptide: Sodium-dependent noradrenaline transporter (615 aa).

Residues 1 to 28 are disordered; the sequence is MLLARMNPQVQPENGGAGPGSEQPPRKR. Residues 1 to 60 are Cytoplasmic-facing; it reads MLLARMNPQVQPENGGAGPGSEQPPRKRKEVLVVKERNGVQCLLASRDGDEQPRETWGKK. Residues 61 to 86 form a helical membrane-spanning segment; it reads IDFLLSVVGFAVDLANVWRFPYLCYK. Na(+) contacts are provided by Gly-69, Ala-71, and Val-72. Asp-73 lines the (R)-noradrenaline pocket. Position 73 (Asp-73) interacts with dopamine. Na(+) is bound at residue Asn-76. (R)-noradrenaline-binding residues include Tyr-85 and Lys-86. Over 87–90 the chain is Extracellular; the sequence is NGGG. The helical transmembrane segment at 91–114 threads the bilayer; that stretch reads AFLIPYTLFLIIAGMPLFYMELAL. At 115-133 the chain is on the cytoplasmic side; that stretch reads GQYNREGAATVWKICPFFK. A helical transmembrane segment spans residues 134-164; it reads GVGYAVILIALYVGFYYNVIIAWSLYYLFSS. Residues Ala-143 and Gly-147 each contribute to the (R)-noradrenaline site. Residue Ala-143 coordinates dopamine. Over 165 to 231 the chain is Extracellular; that stretch reads FTPTLPWTDC…SSGIHDIGLP (67 aa). Cys-174 and Cys-183 are disulfide-bonded. Residues Asn-182, Asn-190, and Asn-196 are each glycosylated (N-linked (GlcNAc...) asparagine). Residues 232-252 form a helical membrane-spanning segment; sequence QWQLLLCLIIVVIVLFFSLWK. Over 253-255 the chain is Cytoplasmic; the sequence is GVK. A helical transmembrane segment spans residues 256-280; it reads TSGKVVWITATLPYLVLFVLLVHGI. The Extracellular portion of the chain corresponds to 281-304; that stretch reads TLPGASNGINAYLHIDFYRLKEAT. Residues 305-330 form a helical membrane-spanning segment; that stretch reads VWIDAATQIFFSLGAGFGVLIAFASY. Phe-315 is a (R)-noradrenaline binding site. Dopamine is bound at residue Phe-315. A Na(+)-binding site is contributed by Ser-316. At 331-336 the chain is on the cytoplasmic side; sequence NKFDNN. The chain crosses the membrane as a helical span at residues 337-360; the sequence is CYRDALLTSTINCVTSFISGFAIF. Residue Asn-348 coordinates Na(+). Residues 361-400 lie on the Extracellular side of the membrane; that stretch reads SILGYMAHEHKVNIEDVATEGAGLVFILYPEAISTLSGST. Glu-380 serves as a coordination point for (R)-noradrenaline. Glu-380 provides a ligand contact to dopamine. The helical transmembrane segment at 401 to 426 threads the bilayer; sequence FWAIVFFIMLLALGIDSSMGGMEAVI. The Na(+) site is built by Asp-416 and Ser-417. The Cytoplasmic portion of the chain corresponds to 427 to 441; that stretch reads TGLADDFQVLKRHRK. Residues 442 to 462 traverse the membrane as a helical segment; that stretch reads LFTFAVSFGTFLLALFCITKG. Gly-463 is a topological domain (extracellular). Residues 464–490 form a helical membrane-spanning segment; the sequence is IYVLTLLDTFAAGTSILFAVLMEAIGV. The Cytoplasmic portion of the chain corresponds to 491–520; the sequence is SWFYGVDRFSNDIQQMMGFKPGLYWRLCWK. A helical transmembrane segment spans residues 521–543; sequence FVSPAFLLFVVIVSIINFKPLTY. At 544-546 the chain is on the extracellular side; that stretch reads DDY. A helical membrane pass occupies residues 547 to 567; it reads IFPLWANWVGWGIAGSSMVLV. The Cytoplasmic segment spans residues 568-615; that stretch reads PAYIVYKFFSTRGSIRERLAYGITPASEHHLVAQRDIRQFQLQHWLAI.

This sequence belongs to the sodium:neurotransmitter symporter (SNF) (TC 2.A.22) family. SLC6A2 subfamily. Monomer. Can form homodimers in the cell membrane; homodimerization is mostly mediated by cholesterol and lipids, and regulates neurotransmitter transport activity. Interacts with PRKCABP. Post-translationally, palmitoylated. Palmitoylation regulates protein levels and neurotransmitter transport.

Its subcellular location is the cell membrane. The protein resides in the cell projection. The protein localises to the axon. It localises to the synapse. It is found in the synaptosome. It catalyses the reaction (R)-noradrenaline(out) + chloride(out) + Na(+)(out) = (R)-noradrenaline(in) + chloride(in) + Na(+)(in). It carries out the reaction dopamine(out) + chloride(out) + Na(+)(out) = dopamine(in) + chloride(in) + Na(+)(in). The enzyme catalyses dopamine(out) + chloride(out) + 2 Na(+)(out) = dopamine(in) + chloride(in) + 2 Na(+)(in). With respect to regulation, inhibited by nisoxetine, oxaprotiline and desipramin. Mediates sodium- and chloride-dependent transport of norepinephrine (also known as noradrenaline), the primary signaling neurotransmitter in the autonomic sympathetic nervous system. Is responsible for norepinephrine re-uptake and clearance from the synaptic cleft, thus playing a crucial role in norepinephrine inactivation and homeostasis. Can also mediate sodium- and chloride-dependent transport of dopamine. The sequence is that of Sodium-dependent noradrenaline transporter (SLC6A2) from Bos taurus (Bovine).